Here is a 900-residue protein sequence, read N- to C-terminus: MKDYKSTLNMPTTGFEMRANLNVKEPKIQQFWVEHQIYEKLLTKNKDKKPFILHDGPPYANGNIHIGHALNKILKDFVVSYHNMNNYYSPYIPGWDTHGLPIEVALSKKIKLSNLSVNERREQCKKYALEQVNNQIQQFLRLGMISDFKQRYLTLDHNYEIDQLKLFTYMLKKGFIYQDFKPVFWSWSSQTALAESEIEYADRQSSAIYVKMKVVDHNDLFTDKPTSLVIWTTTPWTLPANLAIAIHPELVYSLIEYKNENYIIAKPLVETFVKKVGFEDYKWIKDFKANTLEKIKYISPISKKHAFVIMDEYVSANDGTGLVHNAPAFGLEDYYACKKYGIETVVMIDQFGKYNALVNDLELENMFYEDANQVILNRLMNEHLLIHHEVITHSVAHDWRTKKPVMYRATKQWFVSIEKILPNILQTLNNDVKSTSFRGIERMHEMIVNRKEWCISRQRVWGVPIPMIFDENHNAIMDHELVENIINVLNEKGVNAWFDLDVNAFLTPKYLSMKNKTFYKEKDIMDVWFDSGSSYNILGHYNLNYPADVYLEGYDQYRGWFNSSLITGTILNNRAPYKYLVAHGMVLDGEGYKMSKSKGNVVDPLDVCKIYGADVLRLWIANSDYQNDTRISEEILKQNAEIYRRIRNTLFKYSLSILNDFEPSVDFSFNVRQEEQFVLNEFNELHIKVIKAYENFDYQTVVKLFNKFILDLSSWYFENIKDDMYCLAINDPIRKQIQSAVYWILKNSLIDLTPIIPHTTEEAYSFLKDANKKESIRLEDFYDQSQFQFKKGIAHVKAFFSIKDQIFNELENARKNNILKKNNEAFVTIAKNLILDDYLINNPKLLAKWFGVAKIEFANNTNVANANFKKCLRCWNHFPDEEMYNDELSMNCYKVINKIK.

The 'HIGH' region signature appears at 58–68 (PYANGNIHIGH). Residue Glu-552 participates in L-isoleucyl-5'-AMP binding. The 'KMSKS' region motif lies at 593-597 (KMSKS). An ATP-binding site is contributed by Lys-596.

Belongs to the class-I aminoacyl-tRNA synthetase family. IleS type 1 subfamily. As to quaternary structure, monomer.

It localises to the cytoplasm. The enzyme catalyses tRNA(Ile) + L-isoleucine + ATP = L-isoleucyl-tRNA(Ile) + AMP + diphosphate. Functionally, catalyzes the attachment of isoleucine to tRNA(Ile). As IleRS can inadvertently accommodate and process structurally similar amino acids such as valine, to avoid such errors it has two additional distinct tRNA(Ile)-dependent editing activities. One activity is designated as 'pretransfer' editing and involves the hydrolysis of activated Val-AMP. The other activity is designated 'posttransfer' editing and involves deacylation of mischarged Val-tRNA(Ile). This is Isoleucine--tRNA ligase from Ureaplasma parvum serovar 3 (strain ATCC 700970).